Consider the following 385-residue polypeptide: Galactokinase (385 aa).

Position 34 to 37 (34 to 37) interacts with substrate; sequence EHTD. 124–130 serves as a coordination point for ATP; the sequence is SSGLSSS. The Mg(2+) site is built by Ser-130 and Glu-162. Asp-174 functions as the Proton acceptor in the catalytic mechanism. Residue Tyr-223 participates in substrate binding.

Belongs to the GHMP kinase family. GalK subfamily.

It is found in the cytoplasm. It carries out the reaction alpha-D-galactose + ATP = alpha-D-galactose 1-phosphate + ADP + H(+). It participates in carbohydrate metabolism; galactose metabolism. Catalyzes the transfer of the gamma-phosphate of ATP to D-galactose to form alpha-D-galactose-1-phosphate (Gal-1-P). The chain is Galactokinase from Mannheimia succiniciproducens (strain KCTC 0769BP / MBEL55E).